The sequence spans 754 residues: Phosphoinositide 3-kinase regulatory subunit 6 (754 aa).

The segment at 343–363 (ERDLPTGADELPAPGSPEMER) is disordered.

Heterodimer of a catalytic subunit (PIK3CG) and a regulatory (PIK3R6) subunit. The binding of PIK3R6 to PIK3CG may exclude the binding of PIK3R5 to PIK3CG. Interacts with beta-gamma G protein dimers. Interacts with PDE3B and RAPGEF3; form a signaling complex that regulates phosphatidylinositol 3-kinase gamma in angiogenesis.

It is found in the cytoplasm. Its subcellular location is the cell membrane. Regulatory subunit of the PI3K gamma complex. Acts as an adapter to drive activation of PIK3CG by beta-gamma G protein dimers. The PIK3CG:PIK3R6 heterodimer is much less sensitive to beta-gamma G protein dimers than PIK3CG:PIK3R5 and its membrane recruitment and beta-gamma G protein dimer-dependent activation requires HRAS bound to PIK3CG. Recruits of the PI3K gamma complex to a PDE3B:RAPGEF3 signaling complex involved in angiogenesis; signaling seems to involve RRAS. This chain is Phosphoinositide 3-kinase regulatory subunit 6 (PIK3R6), found in Homo sapiens (Human).